Reading from the N-terminus, the 346-residue chain is Phenylalanine--tRNA ligase alpha subunit (346 aa).

Residue glutamate 260 coordinates Mg(2+).

It belongs to the class-II aminoacyl-tRNA synthetase family. Phe-tRNA synthetase alpha subunit type 1 subfamily. In terms of assembly, tetramer of two alpha and two beta subunits. Mg(2+) is required as a cofactor.

It localises to the cytoplasm. The catalysed reaction is tRNA(Phe) + L-phenylalanine + ATP = L-phenylalanyl-tRNA(Phe) + AMP + diphosphate + H(+). The chain is Phenylalanine--tRNA ligase alpha subunit from Herpetosiphon aurantiacus (strain ATCC 23779 / DSM 785 / 114-95).